We begin with the raw amino-acid sequence, 318 residues long: Malonyl-S-ACP:biotin-protein carboxyltransferase MADC (318 aa).

The CoA carboxyltransferase N-terminal domain occupies 2–257 (AKWTELQDKS…VLQKPMEEIE (256 aa)).

The protein localises to the cytoplasm. It carries out the reaction N(6)-biotinyl-L-lysyl-[protein] + malonyl-[ACP] = N(6)-carboxybiotinyl-L-lysyl-[protein] + acetyl-[ACP]. In terms of biological role, gamma subunit of the biotin-dependent malonate decarboxylase multienzyme complex (EC 7.2.4.4). The two subunits MADC and MADD are required for the transfer of the malonate carboxy group from the acyl-carrier protein (ACP) to the prosthetic group of the biotin carrier MADF. Required for the regeneration of ACP. The polypeptide is Malonyl-S-ACP:biotin-protein carboxyltransferase MADC (madC) (Malonomonas rubra).